The sequence spans 375 residues: Anhydro-N-acetylmuramic acid kinase (375 aa).

12-19 (GTSLDGVD) contacts ATP.

It belongs to the anhydro-N-acetylmuramic acid kinase family.

The catalysed reaction is 1,6-anhydro-N-acetyl-beta-muramate + ATP + H2O = N-acetyl-D-muramate 6-phosphate + ADP + H(+). It functions in the pathway amino-sugar metabolism; 1,6-anhydro-N-acetylmuramate degradation. The protein operates within cell wall biogenesis; peptidoglycan recycling. Its function is as follows. Catalyzes the specific phosphorylation of 1,6-anhydro-N-acetylmuramic acid (anhMurNAc) with the simultaneous cleavage of the 1,6-anhydro ring, generating MurNAc-6-P. Is required for the utilization of anhMurNAc either imported from the medium or derived from its own cell wall murein, and thus plays a role in cell wall recycling. The chain is Anhydro-N-acetylmuramic acid kinase from Mannheimia succiniciproducens (strain KCTC 0769BP / MBEL55E).